A 299-amino-acid polypeptide reads, in one-letter code: Glycine--tRNA ligase alpha subunit (299 aa).

This sequence belongs to the class-II aminoacyl-tRNA synthetase family. As to quaternary structure, tetramer of two alpha and two beta subunits.

The protein localises to the cytoplasm. It carries out the reaction tRNA(Gly) + glycine + ATP = glycyl-tRNA(Gly) + AMP + diphosphate. The chain is Glycine--tRNA ligase alpha subunit from Caulobacter vibrioides (strain ATCC 19089 / CIP 103742 / CB 15) (Caulobacter crescentus).